The primary structure comprises 78 residues: Putative defensin-like protein 288 (78 aa).

The signal sequence occupies residues 1–21 (MSNLRLTIAVFLAALFQTLWW).

The protein belongs to the DEFL family.

Its subcellular location is the secreted. This Arabidopsis thaliana (Mouse-ear cress) protein is Putative defensin-like protein 288.